We begin with the raw amino-acid sequence, 274 residues long: Ribosomal RNA small subunit methyltransferase A (274 aa).

Histidine 15, leucine 17, glycine 42, glutamate 64, aspartate 89, and asparagine 108 together coordinate S-adenosyl-L-methionine.

The protein belongs to the class I-like SAM-binding methyltransferase superfamily. rRNA adenine N(6)-methyltransferase family. RsmA subfamily.

The protein resides in the cytoplasm. The catalysed reaction is adenosine(1518)/adenosine(1519) in 16S rRNA + 4 S-adenosyl-L-methionine = N(6)-dimethyladenosine(1518)/N(6)-dimethyladenosine(1519) in 16S rRNA + 4 S-adenosyl-L-homocysteine + 4 H(+). Its function is as follows. Specifically dimethylates two adjacent adenosines (A1518 and A1519) in the loop of a conserved hairpin near the 3'-end of 16S rRNA in the 30S particle. May play a critical role in biogenesis of 30S subunits. The polypeptide is Ribosomal RNA small subunit methyltransferase A (Prochlorococcus marinus (strain MIT 9301)).